Here is a 186-residue protein sequence, read N- to C-terminus: Shikimate kinase (186 aa).

Residue 15-20 coordinates ATP; that stretch reads GAGKTT. T19 serves as a coordination point for Mg(2+). Substrate is bound by residues D37, R61, and G83. R121 provides a ligand contact to ATP. R140 contacts substrate.

It belongs to the shikimate kinase family. Monomer. Requires Mg(2+) as cofactor.

It localises to the cytoplasm. The enzyme catalyses shikimate + ATP = 3-phosphoshikimate + ADP + H(+). Its pathway is metabolic intermediate biosynthesis; chorismate biosynthesis; chorismate from D-erythrose 4-phosphate and phosphoenolpyruvate: step 5/7. In terms of biological role, catalyzes the specific phosphorylation of the 3-hydroxyl group of shikimic acid using ATP as a cosubstrate. In Psychrobacter cryohalolentis (strain ATCC BAA-1226 / DSM 17306 / VKM B-2378 / K5), this protein is Shikimate kinase.